The chain runs to 377 residues: Nitric oxide reductase FlRd-NAD(+) reductase (377 aa).

This sequence belongs to the FAD-dependent oxidoreductase family. Requires FAD as cofactor.

It localises to the cytoplasm. It catalyses the reaction 2 reduced [nitric oxide reductase rubredoxin domain] + NAD(+) + H(+) = 2 oxidized [nitric oxide reductase rubredoxin domain] + NADH. It participates in nitrogen metabolism; nitric oxide reduction. One of at least two accessory proteins for anaerobic nitric oxide (NO) reductase. Reduces the rubredoxin moiety of NO reductase. This Escherichia coli (strain 55989 / EAEC) protein is Nitric oxide reductase FlRd-NAD(+) reductase.